The following is a 615-amino-acid chain: MLRSVVNNNDKAKESEQSVRVATDDPTYQSYAFQPSTSSSNISWFGGLRTKLSQLSLFPDWMSQLGIKSDDEKMETSSTSSPQSEQSIGEYDESTLVFRPVQLDHFGGAGQEDDGEQVDIWDFGATFLADLDSNHVWNDTIERQHFGPLKDLITTGGGANKINNHSFKTHSLLHPTWCDKCGDFIWGILKEALKCEHCNYTCHARCRDLVTLDCRSPGSSLASSTEFDSIYPQLDGTLGTIPKGLILPPAMSSSTGSDKENGNGNSAGISAENPIFSVKNSFTLPKSFSPVDSLRTKEPSAPPESRYATLRVVERYVKEDTPFEWTDEYKEMDLERKIHSYNSLAKGMEITLHEDGVNFGGHIHVNMNLSRPISVVQGVIPPTVYDVVNTAKSTAKTTSLRTITSFFLPRNTAKVINIDSKTTARKMIVTLLKKFRVADNPRKFALYECEQITDEATCTLNRKLTRISDDACPLKVVLNWQSPHCGRALVLQENDTGDILWDAFEIPELENFLRILGMEEKQYVFQTQQKYQQYRYHLDAELRQRGHSVPDAAAQPMVQTNPFLDEEFLRNQDEYGTSDSMLFSGTIKNAIMGEDPDYVNLEYLKKQNMDQSTNL.

Disordered regions lie at residues 1-29 (MLRSVVNNNDKAKESEQSVRVATDDPTYQ) and 69-89 (SDDEKMETSSTSSPQSEQSIG). The span at 76-87 (TSSTSSPQSEQS) shows a compositional bias: low complexity. Residues 164–214 (NHSFKTHSLLHPTWCDKCGDFIWGILKEALKCEHCNYTCHARCRDLVTLDC) form a Phorbol-ester/DAG-type zinc finger. Residues 249 to 268 (PAMSSSTGSDKENGNGNSAG) form a disordered region. Positions 251–268 (MSSSTGSDKENGNGNSAG) are enriched in polar residues. The 101-residue stretch at 396–496 (KTTSLRTITS…RALVLQENDT (101 aa)) folds into the Ras-associating domain. The region spanning 498–545 (DILWDAFEIPELENFLRILGMEEKQYVFQTQQKYQQYRYHLDAELRQR) is the SARAH domain.

As to quaternary structure, interacts with rab-39 (GTP-bound form). Interacts (via SARAH domain) with cst-1; the interaction is required for the phosphorylation of cst-1. In terms of tissue distribution, expressed in the pharynx, epithelial cells, ciliated neurons in the head, body wall muscles, hypodermis, vulva, gonadal sheath cells, tail hypodermis and in coelomocytes. Expressed in the pharynx, neurons and vulva.

It is found in the cytoplasm. The protein resides in the cytoskeleton. In terms of biological role, involved in embryonic morphogenesis. Plays a role in the organization of apical filamentous actin in epithelial cells of the developing embryo. May play a role in let-60-mediated vulval development. May induce nuclear condensation. Positively regulates the oxidative stress response, and this may be in association with the small GTPase rab-39. Not required for muscle integrity. This chain is Ras association domain-containing protein 1 homolog, found in Caenorhabditis elegans.